A 1534-amino-acid polypeptide reads, in one-letter code: DNA-directed RNA polymerase subunit beta'' (1534 aa).

Residues Cys-220, Cys-296, Cys-303, and Cys-306 each contribute to the Zn(2+) site. Basic and acidic residues-rich tracts occupy residues 644 to 668 and 678 to 688; these read RTQEEEYRTREEEYRTREEEYRTRE and PENKYRTREGE. Disordered stretches follow at residues 644–698 and 719–800; these read RTQE…EDEY and YRTL…KKEG. 2 stretches are compositionally biased toward acidic residues: residues 744-762 and 770-789; these read GEYEILEEDSEEEYGSSED and TLEEDSEEDSEEDSEDEYGS.

It belongs to the RNA polymerase beta' chain family. RpoC2 subfamily. In terms of assembly, in plastids the minimal PEP RNA polymerase catalytic core is composed of four subunits: alpha, beta, beta', and beta''. When a (nuclear-encoded) sigma factor is associated with the core the holoenzyme is formed, which can initiate transcription. Zn(2+) is required as a cofactor.

It is found in the plastid. The protein localises to the chloroplast. It carries out the reaction RNA(n) + a ribonucleoside 5'-triphosphate = RNA(n+1) + diphosphate. DNA-dependent RNA polymerase catalyzes the transcription of DNA into RNA using the four ribonucleoside triphosphates as substrates. The chain is DNA-directed RNA polymerase subunit beta'' from Saccharum hybrid (Sugarcane).